The following is a 253-amino-acid chain: 3-dehydroquinate dehydratase (253 aa).

Residues 46 to 48 (EWR) and Arg-82 contribute to the 3-dehydroquinate site. His-143 serves as the catalytic Proton donor/acceptor. Lys-170 (schiff-base intermediate with substrate) is an active-site residue. 3-dehydroquinate-binding residues include Arg-213, Ser-232, and Gln-236.

Belongs to the type-I 3-dehydroquinase family. Homodimer.

The enzyme catalyses 3-dehydroquinate = 3-dehydroshikimate + H2O. Its pathway is metabolic intermediate biosynthesis; chorismate biosynthesis; chorismate from D-erythrose 4-phosphate and phosphoenolpyruvate: step 3/7. Its activity is regulated as follows. Inhibited by flavonoids such as datiscetin, naringenin, marein and phloretin. Its function is as follows. Involved in the third step of the chorismate pathway, which leads to the biosynthesis of aromatic amino acids (AroAA). Catalyzes the cis-dehydration of 3-dehydroquinate (DHQ) and introduces the first double bond of the aromatic ring to yield 3-dehydroshikimate. The reaction involves the formation of an imine intermediate between the keto group of 3-dehydroquinate and the epsilon-amino group of Lys-170 at the active site. This chain is 3-dehydroquinate dehydratase, found in Enterococcus faecalis (strain ATCC 700802 / V583).